A 425-amino-acid chain; its full sequence is Histidine--tRNA ligase (425 aa).

Belongs to the class-II aminoacyl-tRNA synthetase family. As to quaternary structure, homodimer.

It localises to the cytoplasm. It catalyses the reaction tRNA(His) + L-histidine + ATP = L-histidyl-tRNA(His) + AMP + diphosphate + H(+). The protein is Histidine--tRNA ligase of Listeria innocua serovar 6a (strain ATCC BAA-680 / CLIP 11262).